Here is a 99-residue protein sequence, read N- to C-terminus: UPF0235 protein Cag_0319 (99 aa).

This sequence belongs to the UPF0235 family.

The sequence is that of UPF0235 protein Cag_0319 from Chlorobium chlorochromatii (strain CaD3).